The chain runs to 398 residues: Odorant receptor 24a (398 aa).

The Cytoplasmic segment spans residues 1–14 (MLPRFLTASYPMER). Residues 15-31 (HYFMVPKFALSLIGFYP) traverse the membrane as a helical segment. The Extracellular segment spans residues 32–46 (EQKRTVLVKLWSFFN). The helical transmembrane segment at 47–67 (FFILTYGCYAEAYYGIHYIPI) threads the bilayer. Over 68 to 74 (NIATALD) the chain is Cytoplasmic. The helical transmembrane segment at 75–95 (ALCPVASSILSLVKMVAIWWY) threads the bilayer. The Extracellular segment spans residues 96–124 (QDELRSLIERVRFLTEQQKSKRKLGYKKR). Residues 125 to 145 (FYTLATQLTFLLLCCGFCTST) traverse the membrane as a helical segment. At 146-199 (SYSVRHLIDNILRRTHGKDWIYETPFKMMFPDLLLRLPLYPITYILVHWHGYIT) the chain is on the cytoplasmic side. Residues 200–220 (VVCFVGADGFFLGFCLYFTVL) traverse the membrane as a helical segment. Residues 221–269 (LLCLQDDVCDLLEVENIEKSPSEAEEARIVREMEKLVDRHNEVAELTER) lie on the Extracellular side of the membrane. A helical membrane pass occupies residues 270–290 (LSGVMVEITLAHFVTSSLIIG). The Cytoplasmic segment spans residues 291–295 (TSVVD). Residues 296 to 316 (ILLFSGLGIIVYVVYTCAVGV) traverse the membrane as a helical segment. Residues 317-398 (EIFLYCLGGS…SLIALAKSVI (82 aa)) are Extracellular-facing.

This sequence belongs to the insect chemoreceptor superfamily. Heteromeric odorant receptor channel (TC 1.A.69) family. Or1a subfamily. In terms of assembly, interacts with Orco. Complexes exist early in the endomembrane system in olfactory sensory neurons (OSNs), coupling these complexes to the conserved ciliary trafficking pathway. As to expression, not expressed in either the antenna or maxillary palp.

The protein resides in the cell membrane. Functionally, odorant receptor which mediates acceptance or avoidance behavior, depending on its substrates. The odorant receptor repertoire encodes a large collection of odor stimuli that vary widely in identity, intensity, and duration. May form a complex with Orco to form odorant-sensing units, providing sensitive and prolonged odorant signaling and calcium permeability. Involved in the behavioral responses to pentanol, hexanol, octanol, nonanol, propyl acetate, butyl acetate, isoamyl acetate, methyl caproate, anisole, heptanal, 2-heptanone, r-carvone, and nonanoic acid. Also responds to pyrazines. The chain is Odorant receptor 24a (Or24a) from Drosophila melanogaster (Fruit fly).